The sequence spans 488 residues: Cobyric acid synthase (488 aa).

One can recognise a GATase cobBQ-type domain in the interval 255-442; the sequence is ALKIAVPVLP…LHGLFGSDAY (188 aa). The active-site Nucleophile is Cys-337. His-434 is a catalytic residue.

It belongs to the CobB/CobQ family. CobQ subfamily.

It participates in cofactor biosynthesis; adenosylcobalamin biosynthesis. In terms of biological role, catalyzes amidations at positions B, D, E, and G on adenosylcobyrinic A,C-diamide. NH(2) groups are provided by glutamine, and one molecule of ATP is hydrogenolyzed for each amidation. The sequence is that of Cobyric acid synthase from Rhizobium johnstonii (strain DSM 114642 / LMG 32736 / 3841) (Rhizobium leguminosarum bv. viciae).